The chain runs to 830 residues: BLOC-2 complex member HPS5 homolog (830 aa).

3 WD repeats span residues 25 to 64 (RNNSRIKFTCFDCSPKYFVFGANSGSLYLYDRITTSFLAI), 67 to 106 (SQLGTIGKVSISHNEKQIAIGNQTGSIGILSTELAPSTDG), and 114 to 153 (GGPAFVTSFCWTEDDRELYCGDSRGIVSLIQFSLFMGRNI). Residues 578 to 604 (DTETIVRLLRKLETLMEENEEPNARLK) are a coiled coil.

Belongs to the HPS5 family.

In terms of biological role, has a role in the biogenesis of eye pigment granules. Eye pigment granules are specialized forms of late endosomes or lysosomes. Biogenesis of pigment granules in the eye requires molecular components required for protein delivery to lysosomes. This is BLOC-2 complex member HPS5 homolog from Anopheles gambiae (African malaria mosquito).